Reading from the N-terminus, the 188-residue chain is Mitochondrial import receptor subunit TOM20 homolog (188 aa).

The Mitochondrial intermembrane portion of the chain corresponds to 1 to 12 (MTDTLFGFNKSN). A helical transmembrane segment spans residues 13 to 31 (VVLAAGVAGAAFLGYCIYF). Topologically, residues 32-188 (DHKRINAPDY…ELIDDTDDLE (157 aa)) are cytoplasmic. Disordered stretches follow at residues 48–67 (KRRAQAGSGGMAARRPPAGG) and 155–188 (ADEAENEPPLVQYLGDGPPPAQIQELIDDTDDLE). The segment covering 58-67 (MAARRPPAGG) has biased composition (low complexity).

This sequence belongs to the Tom20 family. In terms of assembly, forms part of the preprotein translocase complex of the outer mitochondrial membrane (TOM complex).

Its subcellular location is the mitochondrion outer membrane. Functionally, central component of the receptor complex responsible for the recognition and translocation of cytosolically synthesized mitochondrial preproteins. Together with TOM22 functions as the transit peptide receptor at the surface of the mitochondrion outer membrane and facilitates the movement of preproteins into the translocation pore. This Caenorhabditis briggsae protein is Mitochondrial import receptor subunit TOM20 homolog (tomm-20).